Here is a 195-residue protein sequence, read N- to C-terminus: Putative manganese efflux pump MntP (195 aa).

6 helical membrane-spanning segments follow: residues 3–23 (LSAT…ASVG), 40–60 (GLIF…LGLL), 68–88 (WDHW…VLAG), 106–126 (VLIA…VGLA), 132–152 (ILHA…IGML), and 165–185 (AEII…YSHI).

It belongs to the MntP (TC 9.B.29) family.

The protein localises to the cell inner membrane. Its function is as follows. Probably functions as a manganese efflux pump. This is Putative manganese efflux pump MntP from Sodalis glossinidius (strain morsitans).